We begin with the raw amino-acid sequence, 234 residues long: Flagellar L-ring protein (234 aa).

An N-terminal signal peptide occupies residues 1-15 (MRYAVICMLLLAASG). Cysteine 16 carries the N-palmitoyl cysteine lipid modification. Cysteine 16 is lipidated: S-diacylglycerol cysteine.

The protein belongs to the FlgH family. The basal body constitutes a major portion of the flagellar organelle and consists of four rings (L,P,S, and M) mounted on a central rod.

Its subcellular location is the cell outer membrane. It localises to the bacterial flagellum basal body. Assembles around the rod to form the L-ring and probably protects the motor/basal body from shearing forces during rotation. The chain is Flagellar L-ring protein from Oleidesulfovibrio alaskensis (strain ATCC BAA-1058 / DSM 17464 / G20) (Desulfovibrio alaskensis).